The chain runs to 500 residues: L-arabinose isomerase (500 aa).

Mn(2+)-binding residues include Glu306, Glu333, His349, and His448.

Belongs to the arabinose isomerase family. Mn(2+) is required as a cofactor.

It carries out the reaction beta-L-arabinopyranose = L-ribulose. The protein operates within carbohydrate degradation; L-arabinose degradation via L-ribulose; D-xylulose 5-phosphate from L-arabinose (bacterial route): step 1/3. Functionally, catalyzes the conversion of L-arabinose to L-ribulose. The protein is L-arabinose isomerase of Cellvibrio japonicus (strain Ueda107) (Pseudomonas fluorescens subsp. cellulosa).